The sequence spans 94 residues: ESAT-6-like protein EsxO (94 aa).

It belongs to the WXG100 family. ESAT-6 subfamily. Forms a complex with EsxP.

The protein localises to the secreted. In Mycobacterium tuberculosis (strain CDC 1551 / Oshkosh), this protein is ESAT-6-like protein EsxO.